The primary structure comprises 463 residues: Cysteine--tRNA ligase (463 aa).

Zn(2+) is bound at residue C29. The 'HIGH' region signature appears at 31–41 (PTVYDFAHIGN). Zn(2+) contacts are provided by C227, H252, and E256. Residues 285–289 (KMSKS) carry the 'KMSKS' region motif. K288 contributes to the ATP binding site.

This sequence belongs to the class-I aminoacyl-tRNA synthetase family. In terms of assembly, monomer. It depends on Zn(2+) as a cofactor.

The protein resides in the cytoplasm. The enzyme catalyses tRNA(Cys) + L-cysteine + ATP = L-cysteinyl-tRNA(Cys) + AMP + diphosphate. This is Cysteine--tRNA ligase from Rhodopseudomonas palustris (strain ATCC BAA-98 / CGA009).